Reading from the N-terminus, the 460-residue chain is Probable lipase C14C8.15 (460 aa).

Over 1–16 the chain is Cytoplasmic; sequence MTLNGNIMKYCLEKGE. A helical; Signal-anchor for type II membrane protein transmembrane segment spans residues 17 to 37; that stretch reads ILISFLLIALESMFRICTVIL. The Lumenal portion of the chain corresponds to 38–460; sequence PSPLRNWFYE…LVDGVMNHTI (423 aa). The Nucleophile role is filled by serine 214. Residue asparagine 308 is glycosylated (N-linked (GlcNAc...) asparagine). Active-site charge relay system residues include aspartate 382 and histidine 408. N-linked (GlcNAc...) asparagine glycosylation is present at asparagine 457.

Belongs to the AB hydrolase superfamily. Lipase family.

The protein localises to the golgi apparatus. The protein resides in the membrane. Its function is as follows. Probable lipase. This chain is Probable lipase C14C8.15, found in Schizosaccharomyces pombe (strain 972 / ATCC 24843) (Fission yeast).